We begin with the raw amino-acid sequence, 385 residues long: MKKTLAALIVGAFAASAANAAVVYNNEGTNVELGGRLSIITEQSNSTVDDQEQQHGALRNAGSRFHIKATHNFGDGFYAQGYLETRLVSDYPESSSDHFGGITTKYAYVTLGNKAFGEVKLGRAKTIADGITSAEDKEYGVLNNKKYIPTNGNTVGYTYKGIDGLDGLVLGANYLLAQSRVPGGPSPFPRKQGEVYPQQISNGVQVGAKYDANNIIAGIAFGRTNYKTAGADFDPYGDFGLGRKEQVEGVLSTLGYRFSDLGLLVSLDSGYAKTKYYTTTDSSSGSQTITNPAYDEKRSFVSPGFQYELMEDTNVYGNFKYERTSVNQGKNTREQAVLFGVDHKLHKQVLTYIEGAYARTKTNDKGKTEKTGKEKSVGVGLRVYF.

A signal peptide spans 1–20 (MKKTLAALIVGAFAASAANA).

It belongs to the Gram-negative porin family. In terms of assembly, homotrimer.

It localises to the cell outer membrane. In terms of biological role, forms pores that allow passive diffusion of small molecules across the outer membrane. In Haemophilus influenzae, this protein is Outer membrane protein P2 (ompP2).